The primary structure comprises 150 residues: Transcription antitermination protein NusB (150 aa).

Belongs to the NusB family.

Involved in transcription antitermination. Required for transcription of ribosomal RNA (rRNA) genes. Binds specifically to the boxA antiterminator sequence of the ribosomal RNA (rrn) operons. This is Transcription antitermination protein NusB from Streptococcus pyogenes serotype M3 (strain ATCC BAA-595 / MGAS315).